The sequence spans 122 residues: Large ribosomal subunit protein uL14c (122 aa).

The protein belongs to the universal ribosomal protein uL14 family. Part of the 50S ribosomal subunit.

It is found in the plastid. Its subcellular location is the chloroplast. Binds to 23S rRNA. The polypeptide is Large ribosomal subunit protein uL14c (Oltmannsiellopsis viridis (Marine flagellate)).